Here is a 520-residue protein sequence, read N- to C-terminus: Target of rapamycin complex 2 subunit MAPKAP1 (520 aa).

The 129-residue stretch at 139 to 267 (QSILSVRLEQ…GFSTLALVEK (129 aa)) folds into the CRIM domain. Residues 279 to 353 (LFVRINAAHG…QNSLEFCLVR (75 aa)) are SIN1-type RBD. Residues 310–333 (KRRKGSQRNSGPQYRLEKQSQPNV) are disordered. In terms of domain architecture, SIN1-type PH spans 382–487 (QYKSFKVSMI…IVLKVNYILE (106 aa)). Residues Arg393, Lys428, and Lys464 each coordinate a 1,2-diacyl-sn-glycero-3-phospho-(1D-myo-inositol-3,4,5-trisphosphate).

The protein belongs to the SIN1 family. Component of the mechanistic target of rapamycin complex 2 (mTORC2), consisting in two heterotretramers composed of MTOR, MLST8, RICTOR and MAPKAP1/SIN1. Contrary to mTORC1, mTORC2 does not bind to and is not sensitive to FKBP12-rapamycin.

The protein localises to the cell membrane. Its subcellular location is the endoplasmic reticulum membrane. The protein resides in the early endosome membrane. It is found in the late endosome membrane. It localises to the lysosome membrane. The protein localises to the golgi apparatus membrane. Its subcellular location is the mitochondrion outer membrane. The protein resides in the cytoplasm. It is found in the perinuclear region. It localises to the nucleus. Phosphatidylinositol 3,4,5-trisphosphate (PI(3,4,5)P3) promotes MTOR activation by relieving MAPKAP1/SIN1-mediated inhibition of MTOR that takes place in absence of PI(3,4,5)P3. Functionally, component of the mechanistic target of rapamycin complex 2 (mTORC2), which transduces signals from growth factors to pathways involved in proliferation, cytoskeletal organization, lipogenesis and anabolic output. In response to growth factors, mTORC2 phosphorylates and activates AGC protein kinase family members, including AKT (AKT1, AKT2 and AKT3), PKC (PRKCA, PRKCB and PRKCE) and SGK1. In contrast to mTORC1, mTORC2 is nutrient-insensitive. Within the mTORC2 complex, MAPKAP1/SIN1 acts as a substrate adapter which recognizes and binds AGC protein kinase family members for phosphorylation by MTOR. The protein is Target of rapamycin complex 2 subunit MAPKAP1 (mapkap1) of Xenopus tropicalis (Western clawed frog).